Reading from the N-terminus, the 135-residue chain is Interleukin-4 (135 aa).

An N-terminal signal peptide occupies residues 1–24; that stretch reads MGLTSQLIPALVCLLVCTSHFVHG. 3 cysteine pairs are disulfide-bonded: cysteine 27-cysteine 135, cysteine 48-cysteine 85, and cysteine 70-cysteine 105. N-linked (GlcNAc...) asparagine glycosylation is found at asparagine 62 and asparagine 96.

The protein belongs to the IL-4/IL-13 family.

Its subcellular location is the secreted. In terms of biological role, participates in at least several B-cell activation processes as well as of other cell types. It is a costimulator of DNA-synthesis. It induces the expression of class II MHC molecules on resting B-cells. It enhances both secretion and cell surface expression of IgE and IgG1. It also regulates the expression of the low affinity Fc receptor for IgE (CD23) on both lymphocytes and monocytes. Positively regulates IL31RA expression in macrophages. Stimulates autophagy in dendritic cells by interfering with mTORC1 signaling and through the induction of RUFY4. The sequence is that of Interleukin-4 (IL4) from Capra hircus (Goat).